Here is a 207-residue protein sequence, read N- to C-terminus: MSTKPDMIQKCLWLEILMGIFIAGTLSLDCNLLNVHLRRVTWQNLRHLSSMSNSFPVECLRENIAFELPQEFLQYTQPMKRDIKKAFYEMSLQAFNIFSQHTFKYWKERHLKQIQIGLDQQAEYLNQCLEEDKNENEDMKEMKENEMKPSEARVPQLSSLELRRYFHRIDNFLKEKKYSDCAWEIVRVEIRRCLYYFYKFTALFRRK.

An N-terminal signal peptide occupies residues 1 to 27 (MSTKPDMIQKCLWLEILMGIFIAGTLS). 2 cysteine pairs are disulfide-bonded: Cys-30/Cys-128 and Cys-59/Cys-181. Residues 118–148 (LDQQAEYLNQCLEEDKNENEDMKEMKENEMK) adopt a coiled-coil conformation.

It belongs to the alpha/beta interferon family. In terms of tissue distribution, expressed in keratinocytes, monocytes and in resting dendritic cells.

The protein localises to the secreted. In terms of biological role, may play a role in the regulation of immune cell function. Cytokine that imparts cellular protection against viral infection in a species-specific manner. Activates the interferon-stimulated response element signaling pathway. It is able to directly modulate cytokine release from monocytes and dendritic cells. Binds heparin. In Homo sapiens (Human), this protein is Interferon kappa (IFNK).